Consider the following 286-residue polypeptide: Pyridoxal kinase PdxY (286 aa).

S8 is a substrate binding site. Residues D110 and E147 each contribute to the ATP site. D223 contributes to the substrate binding site.

This sequence belongs to the pyridoxine kinase family. PdxY subfamily. Homodimer. Mg(2+) is required as a cofactor.

It carries out the reaction pyridoxal + ATP = pyridoxal 5'-phosphate + ADP + H(+). It functions in the pathway cofactor metabolism; pyridoxal 5'-phosphate salvage; pyridoxal 5'-phosphate from pyridoxal: step 1/1. Functionally, pyridoxal kinase involved in the salvage pathway of pyridoxal 5'-phosphate (PLP). Catalyzes the phosphorylation of pyridoxal to PLP. The polypeptide is Pyridoxal kinase PdxY (Granulibacter bethesdensis (strain ATCC BAA-1260 / CGDNIH1)).